The following is a 374-amino-acid chain: Chaperone protein DnaJ (374 aa).

Residues 5 to 70 enclose the J domain; sequence DYYEILGVSR…QKRAAYDQYG (66 aa). Residues 129–207 form a CR-type zinc finger; it reads GVTREIRIPT…CHGHGRVEKS (79 aa). The Zn(2+) site is built by cysteine 142, cysteine 145, cysteine 159, cysteine 162, cysteine 181, cysteine 184, cysteine 195, and cysteine 198. 4 CXXCXGXG motif repeats span residues 142–149, 159–166, 181–188, and 195–202; these read CDVCHGSG, CPTCHGQG, CPTCQGQG, and CTKCHGHG.

The protein belongs to the DnaJ family. As to quaternary structure, homodimer. It depends on Zn(2+) as a cofactor.

It is found in the cytoplasm. Its function is as follows. Participates actively in the response to hyperosmotic and heat shock by preventing the aggregation of stress-denatured proteins and by disaggregating proteins, also in an autonomous, DnaK-independent fashion. Unfolded proteins bind initially to DnaJ; upon interaction with the DnaJ-bound protein, DnaK hydrolyzes its bound ATP, resulting in the formation of a stable complex. GrpE releases ADP from DnaK; ATP binding to DnaK triggers the release of the substrate protein, thus completing the reaction cycle. Several rounds of ATP-dependent interactions between DnaJ, DnaK and GrpE are required for fully efficient folding. Also involved, together with DnaK and GrpE, in the DNA replication of plasmids through activation of initiation proteins. The protein is Chaperone protein DnaJ of Sodalis glossinidius (strain morsitans).